Consider the following 152-residue polypeptide: Small ribosomal subunit protein uS15 (152 aa).

Positions 1–11 (MARMHARRRGK) are enriched in basic residues. The tract at residues 1–25 (MARMHARRRGKSSSVRPARNEAPAW) is disordered.

Belongs to the universal ribosomal protein uS15 family. As to quaternary structure, part of the 30S ribosomal subunit.

This is Small ribosomal subunit protein uS15 from Methanoregula boonei (strain DSM 21154 / JCM 14090 / 6A8).